A 485-amino-acid polypeptide reads, in one-letter code: Adenosylhomocysteinase (485 aa).

Residues threonine 64, aspartate 139, and glutamate 205 each coordinate substrate. Residue 206–208 (TTT) coordinates NAD(+). The substrate site is built by lysine 235 and aspartate 239. NAD(+) is bound by residues asparagine 240, 269–274 (GYGDVG), glutamate 292, asparagine 327, 348–350 (IGH), and asparagine 397.

The protein belongs to the adenosylhomocysteinase family. The cofactor is NAD(+).

It catalyses the reaction S-adenosyl-L-homocysteine + H2O = L-homocysteine + adenosine. It functions in the pathway amino-acid biosynthesis; L-homocysteine biosynthesis; L-homocysteine from S-adenosyl-L-homocysteine: step 1/1. In terms of biological role, adenosylhomocysteine is a competitive inhibitor of S-adenosyl-L-methionine-dependent methyl transferase reactions; therefore adenosylhomocysteinase may play a key role in the control of methylations via regulation of the intracellular concentration of adenosylhomocysteine. This Phalaenopsis sp. (Moth orchid) protein is Adenosylhomocysteinase (SAHH).